The following is a 652-amino-acid chain: 2',3'-cyclic-nucleotide 2'-phosphodiesterase/3'-nucleotidase (652 aa).

The N-terminal stretch at 1–24 (MFKRPLTLSLLASLIALTTSTAQA) is a signal peptide. Asp36, His38, Asp81, Asn121, His230, His262, and His264 together coordinate a divalent metal cation. Substrate is bound by residues Tyr445 and 549 to 555 (YRAYSGK).

The protein belongs to the 5'-nucleotidase family. Requires a divalent metal cation as cofactor.

It is found in the periplasm. It carries out the reaction a nucleoside 2',3'-cyclic phosphate + H2O = a nucleoside 3'-phosphate + H(+). The enzyme catalyses a ribonucleoside 3'-phosphate + H2O = a ribonucleoside + phosphate. In terms of biological role, this bifunctional enzyme catalyzes two consecutive reactions during ribonucleic acid degradation. Converts a 2',3'-cyclic nucleotide to a 3'-nucleotide and then the 3'-nucleotide to the corresponding nucleoside and phosphate. The chain is 2',3'-cyclic-nucleotide 2'-phosphodiesterase/3'-nucleotidase (cpdB) from Yersinia enterocolitica.